The chain runs to 490 residues: Hippocampus abundant transcript 1 protein (490 aa).

Met-1 carries the N-acetylmethionine modification. The Extracellular portion of the chain corresponds to 1-40 (MTQGKKKKRAANRSIMLAKKIIIKDGGTPQGIGSPSVYHA). N-linked (GlcNAc...) asparagine glycosylation occurs at Asn-12. The chain crosses the membrane as a helical span at residues 41–61 (VIVIFLEFFAWGLLTAPTLVV). Topologically, residues 62-74 (LHETFPKHTFLMN) are cytoplasmic. A helical membrane pass occupies residues 75–95 (GLIQGVKGLLSFLSAPLIGAL). The Extracellular portion of the chain corresponds to 96-103 (SDVWGRKS). Residues 104–124 (FLLLTVFFTCAPIPLMKISPW) form a helical membrane-spanning segment. Over 125–126 (WY) the chain is Cytoplasmic. Residues 127-147 (FAVISVSGVFAVTFSVVFAYV) traverse the membrane as a helical segment. Residues 148-160 (ADITQEHERSMAY) lie on the Extracellular side of the membrane. Residues 161 to 181 (GLVSATFAASLVTSPAIGAYL) form a helical membrane-spanning segment. Residues 182 to 188 (GRVYGDS) lie on the Cytoplasmic side of the membrane. A helical transmembrane segment spans residues 189–209 (LVVVLATAIALLDICFILVAV). Residues 210–243 (PESLPEKMRPASWGAPISWEQADPFASLKKVGQD) are Extracellular-facing. A helical membrane pass occupies residues 244-264 (SIVLLICITVFLSYLPEAGQY). Residues 265–284 (SSFFLYLRQIMKFSPESVAA) are Cytoplasmic-facing. The chain crosses the membrane as a helical span at residues 285–305 (FIAVLGILSIIAQTIVLSLLM). The Extracellular portion of the chain corresponds to 306 to 313 (RSIGNKNT). Residues 314–334 (ILLGLGFQILQLAWYGFGSEP) form a helical membrane-spanning segment. At 335-337 (WMM) the chain is on the cytoplasmic side. Residues 338 to 358 (WAAGAVAAMSSITFPAVSALV) traverse the membrane as a helical segment. The Extracellular portion of the chain corresponds to 359 to 379 (SRTADADQQGVVQGMITGIRG). A helical transmembrane segment spans residues 380–400 (LCNGLGPALYGFIFYIFHVEL). The Cytoplasmic segment spans residues 401–427 (KELPITGTDLGTNTSPQHHFEQNSIIP). A helical membrane pass occupies residues 428–448 (GPPFLFGACSVLLALLVALFI). Residues 449-490 (PEHTNLSLRSSSWRKHCGSHSHPHNTQAPGEAKEPLLQDTNV) lie on the Extracellular side of the membrane. The N-linked (GlcNAc...) asparagine glycan is linked to Asn-453. Residues 465 to 490 (CGSHSHPHNTQAPGEAKEPLLQDTNV) form a disordered region.

Belongs to the major facilitator superfamily.

It is found in the membrane. This chain is Hippocampus abundant transcript 1 protein, found in Homo sapiens (Human).